A 200-amino-acid chain; its full sequence is GTP cyclohydrolase-2 (200 aa).

Position 50–54 (50–54) interacts with GTP; that stretch reads RVHSE. Zn(2+) is bound by residues Cys-55, Cys-66, and Cys-68. Residues Gln-71, 93–95, and Thr-115 contribute to the GTP site; that span reads EGR. The active-site Proton acceptor is the Asp-127. Arg-129 functions as the Nucleophile in the catalytic mechanism. 2 residues coordinate GTP: Thr-150 and Lys-155.

Belongs to the GTP cyclohydrolase II family. Zn(2+) serves as cofactor.

It carries out the reaction GTP + 4 H2O = 2,5-diamino-6-hydroxy-4-(5-phosphoribosylamino)-pyrimidine + formate + 2 phosphate + 3 H(+). It participates in cofactor biosynthesis; riboflavin biosynthesis; 5-amino-6-(D-ribitylamino)uracil from GTP: step 1/4. In terms of biological role, catalyzes the conversion of GTP to 2,5-diamino-6-ribosylamino-4(3H)-pyrimidinone 5'-phosphate (DARP), formate and pyrophosphate. This chain is GTP cyclohydrolase-2, found in Acinetobacter baumannii (strain AB307-0294).